The chain runs to 246 residues: MIIPAIDLIEGQVVRLYQGDYAQKTTFDLSPLSQLKSYEAQGANWLHIVDLTGAKDPNARQTRLIAGLVSGLDANIQVGGGIRTEAQLAELLEIGVKRVVIGSLAVKETALVQSWFKKYGADAICLALDVNINEQGEKIVAVSGWQSGGGKSLESLVDAFKPYGLKHALVTDISRDGTLKGANTDLYREIAAAYPDINWQASGGIATLDDVAAVRDSGADGIIIGKALLIENFTVREAIQCWPNPQ.

The active-site Proton acceptor is Asp-7. Catalysis depends on Asp-129, which acts as the Proton donor.

Belongs to the HisA/HisF family.

It is found in the cytoplasm. It catalyses the reaction 1-(5-phospho-beta-D-ribosyl)-5-[(5-phospho-beta-D-ribosylamino)methylideneamino]imidazole-4-carboxamide = 5-[(5-phospho-1-deoxy-D-ribulos-1-ylimino)methylamino]-1-(5-phospho-beta-D-ribosyl)imidazole-4-carboxamide. The protein operates within amino-acid biosynthesis; L-histidine biosynthesis; L-histidine from 5-phospho-alpha-D-ribose 1-diphosphate: step 4/9. The polypeptide is 1-(5-phosphoribosyl)-5-[(5-phosphoribosylamino)methylideneamino] imidazole-4-carboxamide isomerase (Shewanella sediminis (strain HAW-EB3)).